The primary structure comprises 72 residues: Translation initiation factor IF-1 (72 aa).

An S1-like domain is found at methionine 1–lysine 72.

Belongs to the IF-1 family. In terms of assembly, component of the 30S ribosomal translation pre-initiation complex which assembles on the 30S ribosome in the order IF-2 and IF-3, IF-1 and N-formylmethionyl-tRNA(fMet); mRNA recruitment can occur at any time during PIC assembly.

The protein localises to the cytoplasm. One of the essential components for the initiation of protein synthesis. Stabilizes the binding of IF-2 and IF-3 on the 30S subunit to which N-formylmethionyl-tRNA(fMet) subsequently binds. Helps modulate mRNA selection, yielding the 30S pre-initiation complex (PIC). Upon addition of the 50S ribosomal subunit IF-1, IF-2 and IF-3 are released leaving the mature 70S translation initiation complex. In Cereibacter sphaeroides (strain ATCC 17029 / ATH 2.4.9) (Rhodobacter sphaeroides), this protein is Translation initiation factor IF-1.